Consider the following 239-residue polypeptide: Ribonuclease PH (239 aa).

Residues Arg86 and 124–126 (GTR) contribute to the phosphate site.

This sequence belongs to the RNase PH family. Homohexameric ring arranged as a trimer of dimers.

It catalyses the reaction tRNA(n+1) + phosphate = tRNA(n) + a ribonucleoside 5'-diphosphate. Phosphorolytic 3'-5' exoribonuclease that plays an important role in tRNA 3'-end maturation. Removes nucleotide residues following the 3'-CCA terminus of tRNAs; can also add nucleotides to the ends of RNA molecules by using nucleoside diphosphates as substrates, but this may not be physiologically important. Probably plays a role in initiation of 16S rRNA degradation (leading to ribosome degradation) during starvation. The chain is Ribonuclease PH from Allorhizobium ampelinum (strain ATCC BAA-846 / DSM 112012 / S4) (Agrobacterium vitis (strain S4)).